Here is a 721-residue protein sequence, read N- to C-terminus: Mitogen-activated protein kinase 6 (721 aa).

A Peptide (Met-Gly) (interchain with G-Cter in ubiquitin) cross-link involves residue Met1. Residues 20 to 316 form the Protein kinase domain; it reads YMDLKPLGCG…AEEALSHPYM (297 aa). ATP is bound by residues 26-34 and Lys49; that span reads LGCGGNGLV. Residue Asp152 is the Proton acceptor of the active site. Phosphoserine; by PAK1, PAK2 and PAK3 is present on Ser189. An SEG motif motif is present at residues 189-191; it reads SEG. An FRIEDE motif motif is present at residues 332-337; it reads FHIEDE. 6 positions are modified to phosphoserine: Ser386, Ser452, Ser556, Ser558, Ser665, and Ser684. Residues 701-715 are compositionally biased toward polar residues; sequence AMKSSPQIPHQTYSS. Residues 701–721 are disordered; sequence AMKSSPQIPHQTYSSILKHLN.

This sequence belongs to the protein kinase superfamily. CMGC Ser/Thr protein kinase family. MAP kinase subfamily. In terms of assembly, heterodimer with ERK4/MAPK4. Interacts with (via FRIEDE motif) MAPKAPK5. Interacts with UBE3A; this interaction may be indirect and mediated by HERC2, possibly via HERC2 interaction with NEURL4. The cofactor is Mg(2+). Post-translationally, phosphorylated at Ser-189 by PAK1, PAK2 and PAK3 resulting in catalytic activation. Phosphorylated by MAPKAPK5 at other sites. Ubiquitination at Met-1 leads to degradation by the proteasome pathway. Highest expression in the skeletal muscle, followed by the brain. Also found in heart, placenta, lung, liver, pancreas, kidney and skin fibroblasts.

It localises to the cytoplasm. It is found in the nucleus. The catalysed reaction is L-seryl-[protein] + ATP = O-phospho-L-seryl-[protein] + ADP + H(+). It carries out the reaction L-threonyl-[protein] + ATP = O-phospho-L-threonyl-[protein] + ADP + H(+). Activated by phosphorylation at Ser-189. Its function is as follows. Atypical MAPK protein. Phosphorylates microtubule-associated protein 2 (MAP2) and MAPKAPK5. The precise role of the complex formed with MAPKAPK5 is still unclear, but the complex follows a complex set of phosphorylation events: upon interaction with atypical MAPKAPK5, ERK3/MAPK6 is phosphorylated at Ser-189 and then mediates phosphorylation and activation of MAPKAPK5, which in turn phosphorylates ERK3/MAPK6. May promote entry in the cell cycle. The protein is Mitogen-activated protein kinase 6 (MAPK6) of Homo sapiens (Human).